The chain runs to 202 residues: Transcriptional regulator SdrP (202 aa).

The 73-residue stretch at 117-189 folds into the HTH crp-type domain; the sequence is QRLKNRMAAA…YGKIQLLDLK (73 aa). The H-T-H motif DNA-binding region spans 149–168; the sequence is HDELAAAVGSVRETVTKVIG.

Homodimer.

Functionally, activates transcription. The consensus DNA-binding site of this transcriptional regulator is 5'-WWGTGAN(5-7)ACACWW-3' in which W is A or T and N is G, A, T or C. Regulated genes include those encoding proteins involved in nutrient and energy supply, redox control and polyadenylation of mRNA. Also regulates genes involved in oxidative stress response such as genes encoding manganese superoxide dismutase and catalase, and genes encoding a protein involved in nucleotide excision repair of damaged DNA and putative proteins involved in redox control, protein degradation and transcriptional regulation. The sequence is that of Transcriptional regulator SdrP from Thermus thermophilus (strain ATCC 27634 / DSM 579 / HB8).